The chain runs to 153 residues: Aspartate carbamoyltransferase regulatory chain (153 aa).

Zn(2+) contacts are provided by cysteine 109, cysteine 114, cysteine 138, and cysteine 141.

It belongs to the PyrI family. Contains catalytic and regulatory chains. The cofactor is Zn(2+).

Involved in allosteric regulation of aspartate carbamoyltransferase. The chain is Aspartate carbamoyltransferase regulatory chain from Shigella dysenteriae serotype 1 (strain Sd197).